We begin with the raw amino-acid sequence, 573 residues long: Methionine--tRNA ligase (573 aa).

A 'HIGH' region motif is present at residues 10 to 20; sequence PYVNSVPHLGN. Residues cysteine 143, cysteine 146, cysteine 156, and cysteine 159 each contribute to the Zn(2+) site. Positions 333 to 337 match the 'KMSKS' region motif; the sequence is KFSKS. Residue lysine 336 participates in ATP binding.

Belongs to the class-I aminoacyl-tRNA synthetase family. MetG type 1 subfamily. Requires Zn(2+) as cofactor.

Its subcellular location is the cytoplasm. It catalyses the reaction tRNA(Met) + L-methionine + ATP = L-methionyl-tRNA(Met) + AMP + diphosphate. Its function is as follows. Is required not only for elongation of protein synthesis but also for the initiation of all mRNA translation through initiator tRNA(fMet) aminoacylation. In Saccharolobus islandicus (strain M.14.25 / Kamchatka #1) (Sulfolobus islandicus), this protein is Methionine--tRNA ligase.